The chain runs to 506 residues: Maturase K (506 aa).

Belongs to the intron maturase 2 family. MatK subfamily.

It localises to the plastid. The protein resides in the chloroplast. Its function is as follows. Usually encoded in the trnK tRNA gene intron. Probably assists in splicing its own and other chloroplast group II introns. The sequence is that of Maturase K from Prunus persica (Peach).